The primary structure comprises 76 residues: Small ribosomal subunit protein bS18 (76 aa).

This sequence belongs to the bacterial ribosomal protein bS18 family. As to quaternary structure, part of the 30S ribosomal subunit. Forms a tight heterodimer with protein bS6.

Binds as a heterodimer with protein bS6 to the central domain of the 16S rRNA, where it helps stabilize the platform of the 30S subunit. This is Small ribosomal subunit protein bS18 from Xylella fastidiosa (strain 9a5c).